Reading from the N-terminus, the 1360-residue chain is DNA mismatch repair protein Msh6 (1360 aa).

Positions 1–84 (MSRQSTLYSF…GLRRSVAPAA (84 aa)) are disordered. Phosphoserine is present on residues Ser-14, Ser-41, and Ser-43. The span at 33–51 (RAAAAPGASPSPGGDAAWS) shows a compositional bias: low complexity. Lys-70 carries the post-translational modification N6-acetyllysine. Ser-79, Ser-91, Ser-137, Ser-200, Ser-219, and Ser-227 each carry phosphoserine. Residues 92–154 (PGDLVWAKME…KRLLKPYTGS (63 aa)) form the PWWP domain. The interval 195 to 362 (VCDEPSEPEE…SGGGDDSSRP (168 aa)) is disordered. 2 stretches are compositionally biased toward acidic residues: residues 198 to 209 (EPSEPEEEEEME) and 219 to 230 (SEEDNEIESEEE). Over residues 240–249 (RSSRQIKKRR) the composition is skewed to basic residues. Phosphoserine is present on residues Ser-252, Ser-254, Ser-256, and Ser-261. The segment covering 263–273 (VEFKPDTKEEG) has biased composition (basic and acidic residues). Phosphothreonine is present on Thr-269. A phosphoserine mark is found at Ser-274, Ser-275, Ser-279, Ser-280, and Ser-309. Over residues 320–351 (PSATKQATSISSETKNTLRAFSAPQNSESQAH) the composition is skewed to polar residues. At Thr-488 the chain carries Phosphothreonine. Lys-504 is subject to N6-acetyllysine. A phosphoserine mark is found at Ser-830 and Ser-935. Thr-1010 carries the post-translational modification Phosphothreonine. 1134–1141 (GPNMGGKS) serves as a coordination point for ATP.

Belongs to the DNA mismatch repair MutS family. Component of the DNA mismatch repair (MMR) complex composed at least of MSH2, MSH3, MSH6, PMS1 and MLH1. Heterodimer consisting of MSH2-MSH6 (MutS alpha). Forms a ternary complex with MutL alpha (MLH1-PMS1). Interacts with MCM9. Part of the BRCA1-associated genome surveillance complex (BASC), which contains BRCA1, MSH2, MSH6, MLH1, ATM, BLM, PMS2 and the RAD50-MRE11-NBS1 protein complex. This association could be a dynamic process changing throughout the cell cycle and within subnuclear domains. As to quaternary structure, (Microbial infection) Interacts with herpes simplex virus 1 protein UL12. Post-translationally, the N-terminus is blocked. Phosphorylated by PRKCZ, which may prevent MutS alpha degradation by the ubiquitin-proteasome pathway.

The protein localises to the nucleus. The protein resides in the chromosome. In terms of biological role, component of the post-replicative DNA mismatch repair system (MMR). Heterodimerizes with MSH2 to form MutS alpha, which binds to DNA mismatches thereby initiating DNA repair. When bound, MutS alpha bends the DNA helix and shields approximately 20 base pairs, and recognizes single base mismatches and dinucleotide insertion-deletion loops (IDL) in the DNA. After mismatch binding, forms a ternary complex with the MutL alpha heterodimer, which is thought to be responsible for directing the downstream MMR events, including strand discrimination, excision, and resynthesis. ATP binding and hydrolysis play a pivotal role in mismatch repair functions. The ATPase activity associated with MutS alpha regulates binding similar to a molecular switch: mismatched DNA provokes ADP--&gt;ATP exchange, resulting in a discernible conformational transition that converts MutS alpha into a sliding clamp capable of hydrolysis-independent diffusion along the DNA backbone. This transition is crucial for mismatch repair. MutS alpha may also play a role in DNA homologous recombination repair. Recruited on chromatin in G1 and early S phase via its PWWP domain that specifically binds trimethylated 'Lys-36' of histone H3 (H3K36me3): early recruitment to chromatin to be replicated allowing a quick identification of mismatch repair to initiate the DNA mismatch repair reaction. In Homo sapiens (Human), this protein is DNA mismatch repair protein Msh6.